The following is a 405-amino-acid chain: ATP phosphoribosyltransferase regulatory subunit (405 aa).

Belongs to the class-II aminoacyl-tRNA synthetase family. HisZ subfamily. As to quaternary structure, heteromultimer composed of HisG and HisZ subunits.

It localises to the cytoplasm. It participates in amino-acid biosynthesis; L-histidine biosynthesis; L-histidine from 5-phospho-alpha-D-ribose 1-diphosphate: step 1/9. Required for the first step of histidine biosynthesis. May allow the feedback regulation of ATP phosphoribosyltransferase activity by histidine. This chain is ATP phosphoribosyltransferase regulatory subunit, found in Oceanobacillus iheyensis (strain DSM 14371 / CIP 107618 / JCM 11309 / KCTC 3954 / HTE831).